We begin with the raw amino-acid sequence, 107 residues long: Universal stress protein B homolog (107 aa).

The next 2 membrane-spanning stretches (helical) occupy residues 6 to 26 (IILF…LTAL) and 86 to 106 (VREL…AAFL).

The protein belongs to the universal stress protein B family.

The protein resides in the cell inner membrane. In Vibrio vulnificus (strain CMCP6), this protein is Universal stress protein B homolog.